Consider the following 267-residue polypeptide: UPF0246 protein Dshi_3333 (267 aa).

The protein belongs to the UPF0246 family.

This chain is UPF0246 protein Dshi_3333, found in Dinoroseobacter shibae (strain DSM 16493 / NCIMB 14021 / DFL 12).